Reading from the N-terminus, the 83-residue chain is Disintegrin isoform D-2 (83 aa).

The Disintegrin domain maps to Pro-2 to His-83. Intrachain disulfides connect Cys-5–Cys-24, Cys-16–Cys-34, Cys-18–Cys-29, Cys-28–Cys-51, Cys-42–Cys-48, Cys-47–Cys-72, and Cys-60–Cys-79. The Cell attachment site signature appears at Arg-64–Asp-66.

Belongs to the venom metalloproteinase (M12B) family. P-II subfamily. P-IIa sub-subfamily. Monomer (disintegrin). In terms of tissue distribution, expressed by the venom gland.

Its subcellular location is the secreted. Inhibits fibrinogen interaction with platelets. Acts by binding to the alpha-IIb/beta-3 (ITGA2B/ITGB3) on the platelet surface and inhibits aggregation induced by ADP, thrombin, platelet-activating factor and collagen. This Bitis arietans (African puff adder) protein is Disintegrin isoform D-2.